A 123-amino-acid chain; its full sequence is Small ribosomal subunit protein uS12 (123 aa).

The segment at 1 to 32 (MPTINQLIRKPREAQKARDKAPALQSSPQKRG) is disordered. Residues 10–21 (KPREAQKARDKA) show a composition bias toward basic and acidic residues. 3-methylthioaspartic acid is present on D89.

Belongs to the universal ribosomal protein uS12 family. In terms of assembly, part of the 30S ribosomal subunit. Contacts proteins S8 and S17. May interact with IF1 in the 30S initiation complex.

In terms of biological role, with S4 and S5 plays an important role in translational accuracy. Functionally, interacts with and stabilizes bases of the 16S rRNA that are involved in tRNA selection in the A site and with the mRNA backbone. Located at the interface of the 30S and 50S subunits, it traverses the body of the 30S subunit contacting proteins on the other side and probably holding the rRNA structure together. The combined cluster of proteins S8, S12 and S17 appears to hold together the shoulder and platform of the 30S subunit. This is Small ribosomal subunit protein uS12 from Azorhizobium caulinodans (strain ATCC 43989 / DSM 5975 / JCM 20966 / LMG 6465 / NBRC 14845 / NCIMB 13405 / ORS 571).